The primary structure comprises 1010 residues: Retinoblastoma-related protein 3 (1010 aa).

Residues 416–616 (TPVSTAMTTA…EKGSSMYNSL (201 aa)) are domain A. A pocket region spans residues 416-858 (TPVSTAMTTA…NEVFIPAVKS (443 aa)). The segment at 617–727 (IVARPALSVE…PAAGGETCAE (111 aa)) is spacer. Residues 728–858 (TGIGVFFSKI…NEVFIPAVKS (131 aa)) are domain B. Disordered regions lie at residues 867 to 889 (ASASPKKKEEEKGPADVGPFPES) and 986 to 1010 (GSDRDAKPAADPAKTTPVKCEPSDS).

Belongs to the retinoblastoma protein (RB) family.

It localises to the nucleus. In terms of biological role, regulator of biological processes that recruits a histone deacetylase to control gene transcription. May play a role in the entry into mitosis, negatively regulating the cell proliferation. Formation of stable complexes with geminiviridae replication-associated proteins may create a cellular environment which favors viral DNA replication. The protein is Retinoblastoma-related protein 3 (RBR3) of Zea mays (Maize).